We begin with the raw amino-acid sequence, 96 residues long: Small ribosomal subunit protein bS6c (96 aa).

It belongs to the bacterial ribosomal protein bS6 family.

It localises to the plastid. It is found in the chloroplast. Binds together with bS18 to 16S ribosomal RNA. This Trieres chinensis (Marine centric diatom) protein is Small ribosomal subunit protein bS6c (rps6).